Consider the following 499-residue polypeptide: Probable dipeptidase B (499 aa).

Cysteine 26 is an active-site residue.

This sequence belongs to the peptidase C69 family.

The catalysed reaction is an L-aminoacyl-L-amino acid + H2O = 2 an L-alpha-amino acid. The polypeptide is Probable dipeptidase B (pepDB) (Streptococcus pyogenes serotype M3 (strain ATCC BAA-595 / MGAS315)).